A 128-amino-acid polypeptide reads, in one-letter code: Large ribosomal subunit protein bL21 (128 aa).

The tract at residues 104 to 128 (GKSPSVGPRPKRVKAEPAPAADAAE) is disordered. Residues 119-128 (EPAPAADAAE) show a composition bias toward low complexity.

The protein belongs to the bacterial ribosomal protein bL21 family. In terms of assembly, part of the 50S ribosomal subunit. Contacts protein L20.

In terms of biological role, this protein binds to 23S rRNA in the presence of protein L20. The chain is Large ribosomal subunit protein bL21 from Rhodopseudomonas palustris (strain HaA2).